The primary structure comprises 213 residues: Pyrrolidone-carboxylate peptidase (213 aa).

Active-site residues include glutamate 78, cysteine 141, and histidine 165.

It belongs to the peptidase C15 family. As to quaternary structure, homotetramer.

It localises to the cytoplasm. It carries out the reaction Release of an N-terminal pyroglutamyl group from a polypeptide, the second amino acid generally not being Pro.. Its function is as follows. Removes 5-oxoproline from various penultimate amino acid residues except L-proline. In Clostridium botulinum (strain Alaska E43 / Type E3), this protein is Pyrrolidone-carboxylate peptidase.